The sequence spans 399 residues: Acetate kinase (399 aa).

Residue Asn7 participates in Mg(2+) binding. Position 14 (Lys14) interacts with ATP. A substrate-binding site is contributed by Arg91. The Proton donor/acceptor role is filled by Asp148. Residues 208–212, 283–285, and 331–335 each bind ATP; these read HIGNG, DMR, and GVGEN. Glu385 contacts Mg(2+).

Belongs to the acetokinase family. Homodimer. Mg(2+) is required as a cofactor. The cofactor is Mn(2+).

It is found in the cytoplasm. The enzyme catalyses acetate + ATP = acetyl phosphate + ADP. Its pathway is metabolic intermediate biosynthesis; acetyl-CoA biosynthesis; acetyl-CoA from acetate: step 1/2. In terms of biological role, catalyzes the formation of acetyl phosphate from acetate and ATP. Can also catalyze the reverse reaction. The sequence is that of Acetate kinase from Bacteroides thetaiotaomicron (strain ATCC 29148 / DSM 2079 / JCM 5827 / CCUG 10774 / NCTC 10582 / VPI-5482 / E50).